We begin with the raw amino-acid sequence, 246 residues long: 3'(2'),5'-bisphosphate nucleotidase CysQ (246 aa).

Residues glutamate 64, aspartate 83, leucine 85, aspartate 86, and aspartate 205 each coordinate Mg(2+). Glutamate 64 contacts substrate. Substrate is bound by residues 85 to 88 (LDGT) and aspartate 205.

It belongs to the inositol monophosphatase superfamily. CysQ family. Mg(2+) serves as cofactor.

It is found in the cell inner membrane. The catalysed reaction is adenosine 3',5'-bisphosphate + H2O = AMP + phosphate. Functionally, converts adenosine-3',5'-bisphosphate (PAP) to AMP. The chain is 3'(2'),5'-bisphosphate nucleotidase CysQ from Salmonella typhimurium (strain LT2 / SGSC1412 / ATCC 700720).